We begin with the raw amino-acid sequence, 280 residues long: 2-dehydro-3-deoxyphosphooctonate aldolase (280 aa).

The protein belongs to the KdsA family.

The protein localises to the cytoplasm. It catalyses the reaction D-arabinose 5-phosphate + phosphoenolpyruvate + H2O = 3-deoxy-alpha-D-manno-2-octulosonate-8-phosphate + phosphate. It functions in the pathway carbohydrate biosynthesis; 3-deoxy-D-manno-octulosonate biosynthesis; 3-deoxy-D-manno-octulosonate from D-ribulose 5-phosphate: step 2/3. The protein operates within bacterial outer membrane biogenesis; lipopolysaccharide biosynthesis. The chain is 2-dehydro-3-deoxyphosphooctonate aldolase from Coxiella burnetii (strain CbuK_Q154) (Coxiella burnetii (strain Q154)).